Reading from the N-terminus, the 310-residue chain is D-alanine--D-alanine ligase (310 aa).

Residues 107–305 form the ATP-grasp domain; sequence KKVWQSAGLP…FSALVQSILA (199 aa). 134-189 is a binding site for ATP; that stretch reads EQLHCQDFVIKPALEGSSVGVSRVKNQEQLAAAIPFAGGARAKIMAEPWIVGRELT. Residues Asp-259, Glu-272, and Asn-274 each coordinate Mg(2+).

Belongs to the D-alanine--D-alanine ligase family. Mg(2+) serves as cofactor. Requires Mn(2+) as cofactor.

Its subcellular location is the cytoplasm. It carries out the reaction 2 D-alanine + ATP = D-alanyl-D-alanine + ADP + phosphate + H(+). Its pathway is cell wall biogenesis; peptidoglycan biosynthesis. Functionally, cell wall formation. The chain is D-alanine--D-alanine ligase from Dichelobacter nodosus (strain VCS1703A).